We begin with the raw amino-acid sequence, 331 residues long: Major outer membrane protein P.IB (331 aa).

Residues 1–19 form the signal peptide; sequence MKKSLIALTLAALPVAAMA.

The protein belongs to the Gram-negative porin family. As to quaternary structure, homotrimer.

The protein resides in the cell outer membrane. In terms of biological role, serves as a slightly cation selective porin. The polypeptide is Major outer membrane protein P.IB (porB) (Neisseria meningitidis serogroup B).